A 145-amino-acid polypeptide reads, in one-letter code: Deoxyuridine 5'-triphosphate nucleotidohydrolase (145 aa).

Residues 65–67, N78, 82–84, and M92 contribute to the substrate site; these read RSG and TID.

Belongs to the dUTPase family. Requires Mg(2+) as cofactor.

The catalysed reaction is dUTP + H2O = dUMP + diphosphate + H(+). Its pathway is pyrimidine metabolism; dUMP biosynthesis; dUMP from dCTP (dUTP route): step 2/2. This enzyme is involved in nucleotide metabolism: it produces dUMP, the immediate precursor of thymidine nucleotides and it decreases the intracellular concentration of dUTP so that uracil cannot be incorporated into DNA. In Chlorobium phaeobacteroides (strain BS1), this protein is Deoxyuridine 5'-triphosphate nucleotidohydrolase.